We begin with the raw amino-acid sequence, 151 residues long: Histone H2A.2.2 (151 aa).

Met-1 carries the post-translational modification N-acetylmethionine. Positions Glu-129–Ala-151 are disordered. Residues Lys-139–Ala-151 show a composition bias toward basic residues. 2 consecutive short sequence motifs (SPKK motif) follow at residues Ser-140 to Lys-143 and Ser-147 to Lys-150.

This sequence belongs to the histone H2A family. In terms of assembly, the nucleosome is a histone octamer containing two molecules each of H2A, H2B, H3 and H4 assembled in one H3-H4 heterotetramer and two H2A-H2B heterodimers. The octamer wraps approximately 147 bp of DNA. Post-translationally, phosphorylated within its C-terminal part, probably at the SPKK motifs.

The protein resides in the nucleus. The protein localises to the chromosome. In terms of biological role, core component of nucleosome. Nucleosomes wrap and compact DNA into chromatin, limiting DNA accessibility to the cellular machineries which require DNA as a template. Histones thereby play a central role in transcription regulation, DNA repair, DNA replication and chromosomal stability. DNA accessibility is regulated via a complex set of post-translational modifications of histones, also called histone code, and nucleosome remodeling. This Triticum aestivum (Wheat) protein is Histone H2A.2.2.